Consider the following 382-residue polypeptide: Protein-arginine rhamnosyltransferase (382 aa).

Residues Asn17–Asp20, Tyr187, Gln252, and Arg268–Ser272 contribute to the dTDP-beta-L-rhamnose site. The Proton acceptor role is filled by Asp20. Residue Glu270 is part of the active site.

It belongs to the glycosyltransferase 104 family.

The catalysed reaction is dTDP-beta-L-rhamnose + L-arginyl-[protein] = N(omega)-(alpha-L-rhamnosyl)-L-arginyl-[protein] + dTDP + H(+). Protein-arginine rhamnosyltransferase that catalyzes the transfer of a single rhamnose to elongation factor P (EF-P) on 'Lys-32', a modification required for EF-P-dependent rescue of polyproline stalled ribosomes. This Neisseria meningitidis protein is Protein-arginine rhamnosyltransferase.